The following is a 76-amino-acid chain: U-scoloptoxin(13)-Sm1a (76 aa).

The N-terminal stretch at 1–22 (MAYICAXTLAFLLCVNTGIIQA) is a signal peptide.

It belongs to the scoloptoxin-13 family. Post-translationally, contains 4 disulfide bonds. As to expression, expressed by the venom gland.

The protein localises to the secreted. The sequence is that of U-scoloptoxin(13)-Sm1a from Scolopendra morsitans (Tanzanian blue ringleg centipede).